Consider the following 364-residue polypeptide: UDP-N-acetylglucosamine--N-acetylmuramyl-(pentapeptide) pyrophosphoryl-undecaprenol N-acetylglucosamine transferase (364 aa).

UDP-N-acetyl-alpha-D-glucosamine is bound by residues 10–12, asparagine 124, arginine 165, serine 193, isoleucine 248, and glutamine 293; that span reads TGG.

Belongs to the glycosyltransferase 28 family. MurG subfamily.

It is found in the cell inner membrane. It catalyses the reaction di-trans,octa-cis-undecaprenyl diphospho-N-acetyl-alpha-D-muramoyl-L-alanyl-D-glutamyl-meso-2,6-diaminopimeloyl-D-alanyl-D-alanine + UDP-N-acetyl-alpha-D-glucosamine = di-trans,octa-cis-undecaprenyl diphospho-[N-acetyl-alpha-D-glucosaminyl-(1-&gt;4)]-N-acetyl-alpha-D-muramoyl-L-alanyl-D-glutamyl-meso-2,6-diaminopimeloyl-D-alanyl-D-alanine + UDP + H(+). It participates in cell wall biogenesis; peptidoglycan biosynthesis. Its function is as follows. Cell wall formation. Catalyzes the transfer of a GlcNAc subunit on undecaprenyl-pyrophosphoryl-MurNAc-pentapeptide (lipid intermediate I) to form undecaprenyl-pyrophosphoryl-MurNAc-(pentapeptide)GlcNAc (lipid intermediate II). In Geobacter metallireducens (strain ATCC 53774 / DSM 7210 / GS-15), this protein is UDP-N-acetylglucosamine--N-acetylmuramyl-(pentapeptide) pyrophosphoryl-undecaprenol N-acetylglucosamine transferase.